The sequence spans 521 residues: ATP synthase subunit beta (521 aa).

Composition is skewed to low complexity over residues 1–21 (MAKA…AAKA) and 28–42 (PKTT…TKSG). Positions 1–42 (MAKAATPKTTAAAEAKPAAKAPAKKAAPKTTAAAKPAATKSG) are disordered. ATP is bound at residue 199–206 (GGAGVGKT).

It belongs to the ATPase alpha/beta chains family. As to quaternary structure, F-type ATPases have 2 components, CF(1) - the catalytic core - and CF(0) - the membrane proton channel. CF(1) has five subunits: alpha(3), beta(3), gamma(1), delta(1), epsilon(1). CF(0) has three main subunits: a(1), b(2) and c(9-12). The alpha and beta chains form an alternating ring which encloses part of the gamma chain. CF(1) is attached to CF(0) by a central stalk formed by the gamma and epsilon chains, while a peripheral stalk is formed by the delta and b chains.

It is found in the cell inner membrane. The catalysed reaction is ATP + H2O + 4 H(+)(in) = ADP + phosphate + 5 H(+)(out). Produces ATP from ADP in the presence of a proton gradient across the membrane. The catalytic sites are hosted primarily by the beta subunits. This Brucella abortus (strain 2308) protein is ATP synthase subunit beta.